The primary structure comprises 301 residues: Ribosomal protein L11 methyltransferase (301 aa).

S-adenosyl-L-methionine contacts are provided by T146, G167, D189, and N237.

Belongs to the methyltransferase superfamily. PrmA family.

The protein resides in the cytoplasm. It catalyses the reaction L-lysyl-[protein] + 3 S-adenosyl-L-methionine = N(6),N(6),N(6)-trimethyl-L-lysyl-[protein] + 3 S-adenosyl-L-homocysteine + 3 H(+). Functionally, methylates ribosomal protein L11. The protein is Ribosomal protein L11 methyltransferase of Prochlorococcus marinus (strain MIT 9303).